Here is a 248-residue protein sequence, read N- to C-terminus: Probable transcriptional regulatory protein blr1534 (248 aa).

The tract at residues M1–K21 is disordered.

Belongs to the TACO1 family.

Its subcellular location is the cytoplasm. In Bradyrhizobium diazoefficiens (strain JCM 10833 / BCRC 13528 / IAM 13628 / NBRC 14792 / USDA 110), this protein is Probable transcriptional regulatory protein blr1534.